Here is a 389-residue protein sequence, read N- to C-terminus: Succinate--CoA ligase [ADP-forming] subunit beta (389 aa).

Residues 9 to 244 (KEILRKYNVP…LDEEDANEIE (236 aa)) form the ATP-grasp domain. Residues Lys46, 53 to 55 (GRG), Glu99, Ala102, and Glu107 contribute to the ATP site. Mg(2+) contacts are provided by Asn199 and Asp213. Substrate is bound by residues Asn264 and 321 to 323 (GIM).

Belongs to the succinate/malate CoA ligase beta subunit family. Heterotetramer of two alpha and two beta subunits. It depends on Mg(2+) as a cofactor.

The enzyme catalyses succinate + ATP + CoA = succinyl-CoA + ADP + phosphate. It carries out the reaction GTP + succinate + CoA = succinyl-CoA + GDP + phosphate. The protein operates within carbohydrate metabolism; tricarboxylic acid cycle; succinate from succinyl-CoA (ligase route): step 1/1. Functionally, succinyl-CoA synthetase functions in the citric acid cycle (TCA), coupling the hydrolysis of succinyl-CoA to the synthesis of either ATP or GTP and thus represents the only step of substrate-level phosphorylation in the TCA. The beta subunit provides nucleotide specificity of the enzyme and binds the substrate succinate, while the binding sites for coenzyme A and phosphate are found in the alpha subunit. The sequence is that of Succinate--CoA ligase [ADP-forming] subunit beta from Cupriavidus pinatubonensis (strain JMP 134 / LMG 1197) (Cupriavidus necator (strain JMP 134)).